The sequence spans 262 residues: Succinate dehydrogenase [ubiquinone] iron-sulfur subunit (262 aa).

Residues 21–110 form the 2Fe-2S ferredoxin-type domain; the sequence is KLIKIFRWDS…NNIIYVYPLP (90 aa). Cysteine 73, cysteine 78, cysteine 81, and cysteine 93 together coordinate [2Fe-2S] cluster. Residues 154 to 184 form the 4Fe-4S ferredoxin-type domain; it reads DRLYLDGLYECILCACCSASCPSYWWNHDKY. The [4Fe-4S] cluster site is built by cysteine 164, cysteine 167, and cysteine 170. Cysteine 174 is a [3Fe-4S] cluster binding site. Tryptophan 179 contacts a ubiquinone. The [3Fe-4S] cluster site is built by cysteine 221 and cysteine 227. Cysteine 231 serves as a coordination point for [4Fe-4S] cluster.

It belongs to the succinate dehydrogenase/fumarate reductase iron-sulfur protein family. Component of complex II composed of four subunits: a flavoprotein (FP), an iron-sulfur protein (IP), and a cytochrome b composed of a large and a small subunit. [2Fe-2S] cluster serves as cofactor. It depends on [3Fe-4S] cluster as a cofactor. [4Fe-4S] cluster is required as a cofactor.

It is found in the mitochondrion inner membrane. The enzyme catalyses a quinone + succinate = fumarate + a quinol. The protein operates within carbohydrate metabolism; tricarboxylic acid cycle; fumarate from succinate (eukaryal route): step 1/1. Iron-sulfur protein (IP) subunit of succinate dehydrogenase (SDH) that is involved in complex II of the mitochondrial electron transport chain and is responsible for transferring electrons from succinate to ubiquinone (coenzyme Q). The sequence is that of Succinate dehydrogenase [ubiquinone] iron-sulfur subunit (SDH2) from Cyanidium caldarium (Red alga).